The sequence spans 355 residues: 3-dehydroquinate synthase (355 aa).

Residues 71-76, 105-109, 129-130, lysine 142, and lysine 151 each bind NAD(+); these read EGEASK, GVVGD, and TS. 3 residues coordinate Zn(2+): glutamate 184, histidine 246, and histidine 263.

Belongs to the sugar phosphate cyclases superfamily. Dehydroquinate synthase family. Co(2+) serves as cofactor. It depends on Zn(2+) as a cofactor. Requires NAD(+) as cofactor.

The protein localises to the cytoplasm. It carries out the reaction 7-phospho-2-dehydro-3-deoxy-D-arabino-heptonate = 3-dehydroquinate + phosphate. The protein operates within metabolic intermediate biosynthesis; chorismate biosynthesis; chorismate from D-erythrose 4-phosphate and phosphoenolpyruvate: step 2/7. In terms of biological role, catalyzes the conversion of 3-deoxy-D-arabino-heptulosonate 7-phosphate (DAHP) to dehydroquinate (DHQ). The chain is 3-dehydroquinate synthase from Streptococcus gordonii (strain Challis / ATCC 35105 / BCRC 15272 / CH1 / DL1 / V288).